The primary structure comprises 1445 residues: MEEGHGLDLTYITERIIAVSFPAGCSEESYLHNLQEVTRMLKSKHGDNYLVLNLSEKRYDLTKLNPKIMDVGWPELHAPPLDKMCTICKAQESWLNSNLQHVVVIHCRGGKGRIGVVISSYMHFTNVSASADQALDRFAMKKFYDDKVSALMQPSQKRYVQFLSGLLSGSVKMNASPLFLHFVILHGTPNFDTGGVCRPFLKLYQAMQPVYTSGIYNVGPENPSRICIVIEPAQLLKGDVMVKCYHKKYRSATRDVIFRLQFHTGAVQGYGLVFGKEDLDNASKDDRFPDYGKVELVFSATPEKIQGSEHLYNDHGVIVDYNTTDPLIRWDSYENLSADGEVLHTQGPVDGSLYAKVRKKSSSDPGIPGGPQAIPATNSPDHSDHTLSVSSDSGHSTASARTDKTEERLAPGTRRGLSAQEKAELDQLLSGFGLEDPGSSLKEMTDARSKYSGTRHVVPAQVHVNGDAALKDRETDILDDEMPHHDLHSVDSLGTLSSSEGPQSAHLGPFTCHKSSQNSLLSDGFGSNVGEDPQGTLVPDLGLGMDGPYERERTFGSREPKQPQPLLRKPSVSAQMQAYGQSSYSTQTWVRQQQMVVAHQYSFAPDGEARLVSRCPADNPGLVQAQPRVPLTPTRGTSSRVAVQRGVGSGPHPPDTQQPSPSKAFKPRFPGDQVVNGAGPELSTGPSPGSPTLDIDQSIEQLNRLILELDPTFEPIPTHMNALGSQANGSVSPDSVGGGLRASSRLPDTGEGPSRATGRQGSSAEQPLGGRLRKLSLGQYDNDAGGQLPFSKCAWGKAGVDYAPNLPPFPSPADVKETMTPGYPQDLDIIDGRILSSKESMCSTPAFPVSPETPYVKTALRHPPFSPPEPPLSSPASQHKGGREPRSCPETLTHAVGMSESPIGPKSTMLRADASSTPSFQQAFASSCTISSNGPGQRRESSSSAERQWVESSPKPMVSLLGSGRPTGSPLSAEFSGTRKDSPVLSCFPPSELQAPFHSHELSLAEPPDSLAPPSSQAFLGFGTAPVGSGLPPEEDLGALLANSHGASPTPSIPLTATGAADNGFLSHNFLTVAPGHSSHHSPGLQGQGVTLPGQPPLPEKKRASEGDRSLGSVSPSSSGFSSPHSGSTISIPFPNVLPDFSKASEAASPLPDSPGDKLVIVKFVQDTSKFWYKADISREQAIAMLKDKEPGSFIVRDSHSFRGAYGLAMKVATPPPSVLQLNKKAGDLANELVRHFLIECTPKGVRLKGCSNEPYFGSLTALVCQHSITPLALPCKLLIPERDPLEEIAESSPQTAANSAAELLKQGAACNVWYLNSVEMESLTGHQAIQKALSITLVQEPPPVSTVVHFKVSAQGITLTDNQRKLFFRRHYPVNSVIFCALDPQDRKWIKDGPSSKVFGFVARKQGSATDNVCHLFAEHDPEQPASAIVNFVSKVMIGSPKKV.

The 170-residue stretch at 1–170 (MEEGHGLDLT…QFLSGLLSGS (170 aa)) folds into the Phosphatase tensin-type domain. The 127-residue stretch at 175-301 (ASPLFLHFVI…GKVELVFSAT (127 aa)) folds into the C2 tensin-type domain. The residue at position 323 (Thr-323) is a Phosphothreonine. 2 positions are modified to phosphoserine: Ser-332 and Ser-361. The tract at residues 358–421 (RKKSSSDPGI…GTRRGLSAQE (64 aa)) is disordered. Residues 386–400 (TLSVSSDSGHSTASA) show a composition bias toward polar residues. A phosphoserine mark is found at Ser-440 and Ser-516. The tract at residues 538–568 (VPDLGLGMDGPYERERTFGSREPKQPQPLLR) is disordered. The span at 548-561 (PYERERTFGSREPK) shows a compositional bias: basic and acidic residues. Phosphoserine is present on Ser-571. Disordered regions lie at residues 618–695 (DNPG…TLDI) and 717–769 (PTHM…QPLG). At Thr-632 the chain carries Phosphothreonine. Phosphoserine is present on residues Ser-649, Ser-660, Ser-687, and Ser-690. A compositionally biased stretch (polar residues) spans 723–733 (LGSQANGSVSP). A phosphoserine mark is found at Ser-735 and Ser-776. Residue Tyr-780 is modified to Phosphotyrosine. A phosphoserine mark is found at Ser-811, Ser-866, and Ser-901. Disordered regions lie at residues 859 to 981 (ALRH…TRKD) and 1076 to 1127 (GHSS…PHSG). Residues 864–873 (PFSPPEPPLS) are compositionally biased toward pro residues. The span at 914–935 (ASSTPSFQQAFASSCTISSNGP) shows a compositional bias: polar residues. Residues 1099–1109 (PEKKRASEGDR) are compositionally biased toward basic and acidic residues. Low complexity predominate over residues 1110–1127 (SLGSVSPSSSGFSSPHSG). Phosphoserine is present on residues Ser-1149 and Ser-1154. In terms of domain architecture, SH2 spans 1172–1282 (WYKADISREQ…ALPCKLLIPE (111 aa)). Phosphoserine occurs at positions 1293 and 1441. In terms of domain architecture, PTB spans 1310-1444 (ACNVWYLNSV…SKVMIGSPKK (135 aa)).

The protein belongs to the PTEN phosphatase protein family. As to quaternary structure, interacts with EGFR; EGF promotes the interaction with EGFR. Interacts with PTK2/FAK1 and BCAR1. Tyrosine phosphorylation is critical for these interactions. Interacts with Rho GTPase-activating protein DLC1 and with the regulatory p85 subunit of the PI3K kinase complex; in resting cells, interacts (via C2 tensin-type domain) with DLC1 but, following growth factor stimulation, TNS3 is phosphorylated which leads to weakened interaction with DLC1 and enhanced interaction (via C2 tensin-type domain) with p85 while DLC1 interaction with PTEN increases. Interacts (when phosphorylated on the SH2 domain) with integrins ITGB1, ITGB3 and ITGB5 and with scaffolding protein PEAK1 (phosphorylated on 'Tyr-635'); mediates the association of PEAK1 with ITGB1, ITGB3 and ITGB5. Interacts (via N-terminus) with DOCK5 (via N-terminus); the interaction increases DOCK5 guanine nucleotide exchange activity towards Rac. Interacts with receptor tyrosine kinase MET. Phosphorylated on Ser/Thr and Tyr residues. Phosphorylated on Thr-323 in the C2-type tensin domain following EGF stimulation which changes its binding preference from DLC1 to the p85 regulatory subunit of the PI3K kinase complex. EGF induces tyrosine phosphorylation in a time- and dose-dependent manner. Phosphorylation of the SH2 domain enhances interaction with PEAK1. Expressed in umbilical vein endothelial cells, epithelial cells, and fibroblasts cells (at protein level). Highly expressed in thyroid, kidney and placenta. Low expression in heart, skeletal muscle, spleen, liver, and lung. Expressed at higher levels in tonsil-derived mesenchymal stem cells (MSCs) than in adipose tissue-derived MSCs or bone marrow-derived MSCs. Expressed in tumor endothelial cells. Expression seems to be down-regulated in thyroid tumor tissues and in anaplastic carcinomas.

The protein resides in the cell junction. Its subcellular location is the focal adhesion. It is found in the cell projection. The protein localises to the podosome. Functionally, may act as a protein phosphatase and/or a lipid phosphatase. Involved in the dissociation of the integrin-tensin-actin complex. EGF activates TNS4 and down-regulates TNS3 which results in capping the tail of ITGB1. Increases DOCK5 guanine nucleotide exchange activity towards Rac and plays a role in osteoclast podosome organization. Enhances RHOA activation in the presence of DLC1. Required for growth factor-induced epithelial cell migration; growth factor stimulation induces TNS3 phosphorylation which changes its binding preference from DLC1 to the p85 regulatory subunit of the PI3K kinase complex, displacing PI3K inhibitor PTEN and resulting in translocation of the TNS3-p85 complex to the leading edge of migrating cells to promote RAC1 activation. Meanwhile, PTEN switches binding preference from p85 to DLC1 and the PTEN-DLC1 complex translocates to the posterior of migrating cells to activate RHOA. Acts as an adapter protein by bridging the association of scaffolding protein PEAK1 with integrins ITGB1, ITGB3 and ITGB5 which contributes to the promotion of cell migration. Controls tonsil-derived mesenchymal stem cell proliferation and differentiation by regulating the activity of integrin ITGB1. This Homo sapiens (Human) protein is Tensin-3 (TNS3).